We begin with the raw amino-acid sequence, 362 residues long: P2Y purinoceptor 1 (362 aa).

Residues 1–40 lie on the Extracellular side of the membrane; sequence MTEALISAALNGTQPELLAGGWAAGNATTKCSLTKTGFQF. Asn-11 and Asn-26 each carry an N-linked (GlcNAc...) asparagine glycan. 2 cysteine pairs are disulfide-bonded: Cys-31/Cys-285 and Cys-113/Cys-191. Lys-35 is a binding site for ADP. A helical transmembrane segment spans residues 41 to 63; the sequence is YYLPTVYILVFITGFLGNSVAIW. Residues 64–76 lie on the Cytoplasmic side of the membrane; that stretch reads MFVFHMRPWSGIS. Residues 77–98 form a helical membrane-spanning segment; it reads VYMFNLALADFLYVLTLPALIF. Topologically, residues 99–114 are extracellular; sequence YYFNKTDWIFGDVMCK. Asn-102 is a glycosylation site (N-linked (GlcNAc...) asparagine). The chain crosses the membrane as a helical span at residues 115 to 136; sequence LQRFIFHVNLYGSILFLTCISV. The Cytoplasmic segment spans residues 137–155; the sequence is HRYTGVVHPLKSLGRLKKK. A helical membrane pass occupies residues 156–177; it reads NAVYVSSLVWALVVAVIAPILF. Topologically, residues 178-203 are extracellular; it reads YSGTGVRRNKTITCYDTTADEYLRSY. Asn-186 carries N-linked (GlcNAc...) asparagine glycosylation. 192 to 194 is a binding site for ADP; that stretch reads YDT. The helical transmembrane segment at 204 to 226 threads the bilayer; it reads FVYSMCTTVFMFCIPFIVILGCY. The Cytoplasmic portion of the chain corresponds to 227 to 249; it reads GLIVKALIYKDLDNSPLRRKSIY. A helical membrane pass occupies residues 250 to 273; sequence LVIIVLTVFAVSYLPFHVMKTLNL. ADP-binding positions include 272 to 276, 292 to 295, and Arg-299; these read NLRAR and YATY. The Extracellular segment spans residues 274–292; that stretch reads RARLDFQTPQMCAFNDKVY. A helical transmembrane segment spans residues 293–314; that stretch reads ATYQVTRGLASLNSCVDPILYF. At 315-362 the chain is on the cytoplasmic side; the sequence is LAGDTFRRRLSRATRKSSRRSEPNVQSKSEEMTLNILTEYKQNGDTSL.

It belongs to the G-protein coupled receptor 1 family. In terms of tissue distribution, brain, spinal cord, gastrointestinal tract, spleen and leg muscle. Is not detected in the heart, liver, stomach, lung and kidney.

Its subcellular location is the cell membrane. Receptor for extracellular adenine nucleotides such as ADP. In platelets, binding to ADP leads to mobilization of intracellular calcium ions via activation of phospholipase C, a change in platelet shape, and ultimately platelet aggregation. In Gallus gallus (Chicken), this protein is P2Y purinoceptor 1 (P2RY1).